Consider the following 660-residue polypeptide: Bifunctional polymyxin resistance protein ArnA (660 aa).

Residues 1–304 (MKTVVFAYHD…MLGLVQGSRL (304 aa)) form a formyltransferase ArnAFT region. 86–88 (HLI) contacts (6R)-10-formyltetrahydrofolate. Catalysis depends on H104, which acts as the Proton donor; for formyltransferase activity. (6R)-10-formyltetrahydrofolate-binding positions include R114 and 136–140 (VKRAD). The interval 314 to 660 (RRTRVLILGV…RTVDLTDKPS (347 aa)) is dehydrogenase ArnADH. NAD(+)-binding positions include D347 and 368 to 369 (DI). Residues A393, Y398, and 432 to 433 (TS) each bind UDP-alpha-D-glucuronate. The active-site Proton acceptor; for decarboxylase activity is the E434. Residues R460, N492, 526–535 (KLIDGGKQKR), and Y613 each bind UDP-alpha-D-glucuronate. Catalysis depends on R619, which acts as the Proton donor; for decarboxylase activity.

This sequence in the N-terminal section; belongs to the Fmt family. UDP-L-Ara4N formyltransferase subfamily. In the C-terminal section; belongs to the NAD(P)-dependent epimerase/dehydratase family. UDP-glucuronic acid decarboxylase subfamily. Homohexamer, formed by a dimer of trimers.

It catalyses the reaction UDP-alpha-D-glucuronate + NAD(+) = UDP-beta-L-threo-pentopyranos-4-ulose + CO2 + NADH. The enzyme catalyses UDP-4-amino-4-deoxy-beta-L-arabinose + (6R)-10-formyltetrahydrofolate = UDP-4-deoxy-4-formamido-beta-L-arabinose + (6S)-5,6,7,8-tetrahydrofolate + H(+). The protein operates within nucleotide-sugar biosynthesis; UDP-4-deoxy-4-formamido-beta-L-arabinose biosynthesis; UDP-4-deoxy-4-formamido-beta-L-arabinose from UDP-alpha-D-glucuronate: step 1/3. It functions in the pathway nucleotide-sugar biosynthesis; UDP-4-deoxy-4-formamido-beta-L-arabinose biosynthesis; UDP-4-deoxy-4-formamido-beta-L-arabinose from UDP-alpha-D-glucuronate: step 3/3. It participates in bacterial outer membrane biogenesis; lipopolysaccharide biosynthesis. In terms of biological role, bifunctional enzyme that catalyzes the oxidative decarboxylation of UDP-glucuronic acid (UDP-GlcUA) to UDP-4-keto-arabinose (UDP-Ara4O) and the addition of a formyl group to UDP-4-amino-4-deoxy-L-arabinose (UDP-L-Ara4N) to form UDP-L-4-formamido-arabinose (UDP-L-Ara4FN). The modified arabinose is attached to lipid A and is required for resistance to polymyxin and cationic antimicrobial peptides. In Shigella flexneri, this protein is Bifunctional polymyxin resistance protein ArnA.